The following is a 241-amino-acid chain: Interleukin-6 (241 aa).

The N-terminal stretch at Met1 to Ala26 is a signal peptide. Residues Pro32–Gly51 form a disordered region. Cystine bridges form between Cys72–Cys78 and Cys101–Cys111. Asn108 carries N-linked (GlcNAc...) asparagine glycosylation.

The protein belongs to the IL-6 superfamily. As to quaternary structure, component of a hexamer of two molecules each of IL6, IL6R and IL6ST; first binds to IL6R to associate with the signaling subunit IL6ST. Interacts with IL6R (via the N-terminal ectodomain); this interaction may be affected by IL6R-binding with SORL1, hence decreasing IL6 cis signaling. Interacts with SORL1 (via the N-terminal ectodomain); this interaction leads to IL6 internalization and lysosomal degradation. May form a trimeric complex with the soluble SORL1 ectodomain and soluble IL6R receptor; this interaction might stabilize circulating IL6, hence promoting IL6 trans signaling.

The protein localises to the secreted. Functionally, cytokine with a wide variety of biological functions in immunity, tissue regeneration, and metabolism. Binds to IL6R, then the complex associates to the signaling subunit IL6ST/gp130 to trigger the intracellular IL6-signaling pathway. The interaction with the membrane-bound IL6R and IL6ST stimulates 'classic signaling', whereas the binding of IL6 and soluble IL6R to IL6ST stimulates 'trans-signaling'. Alternatively, 'cluster signaling' occurs when membrane-bound IL6:IL6R complexes on transmitter cells activate IL6ST receptors on neighboring receiver cells. In terms of biological role, IL6 is a potent inducer of the acute phase response. Rapid production of IL6 contributes to host defense during infection and tissue injury, but excessive IL6 synthesis is involved in disease pathology. In the innate immune response, is synthesized by myeloid cells, such as macrophages and dendritic cells, upon recognition of pathogens through toll-like receptors (TLRs) at the site of infection or tissue injury. In the adaptive immune response, is required for the differentiation of B cells into immunoglobulin-secreting cells. Plays a major role in the differentiation of CD4(+) T cell subsets. Essential factor for the development of T follicular helper (Tfh) cells that are required for the induction of germinal-center formation. Required to drive naive CD4(+) T cells to the Th17 lineage. Also required for proliferation of myeloma cells and the survival of plasmablast cells. Acts as an essential factor in bone homeostasis and on vessels directly or indirectly by induction of VEGF, resulting in increased angiogenesis activity and vascular permeability. Induces, through 'trans-signaling' and synergistically with IL1B and TNF, the production of VEGF. Involved in metabolic controls, is discharged into the bloodstream after muscle contraction increasing lipolysis and improving insulin resistance. 'Trans-signaling' in central nervous system also regulates energy and glucose homeostasis. Mediates, through GLP-1, crosstalk between insulin-sensitive tissues, intestinal L cells and pancreatic islets to adapt to changes in insulin demand. Also acts as a myokine. Plays a protective role during liver injury, being required for maintenance of tissue regeneration. Also has a pivotal role in iron metabolism by regulating HAMP/hepcidin expression upon inflammation or bacterial infection. Through activation of IL6ST-YAP-NOTCH pathway, induces inflammation-induced epithelial regeneration. The polypeptide is Interleukin-6 (IL6) (Oryctolagus cuniculus (Rabbit)).